The primary structure comprises 560 residues: Formate--tetrahydrofolate ligase (560 aa).

69–76 serves as a coordination point for ATP; sequence TPAGEGKS.

This sequence belongs to the formate--tetrahydrofolate ligase family.

The enzyme catalyses (6S)-5,6,7,8-tetrahydrofolate + formate + ATP = (6R)-10-formyltetrahydrofolate + ADP + phosphate. Its pathway is one-carbon metabolism; tetrahydrofolate interconversion. In Listeria monocytogenes serotype 4b (strain CLIP80459), this protein is Formate--tetrahydrofolate ligase.